Consider the following 100-residue polypeptide: Urease subunit gamma (100 aa).

It belongs to the urease gamma subunit family. Heterotrimer of UreA (gamma), UreB (beta) and UreC (alpha) subunits. Three heterotrimers associate to form the active enzyme.

The protein localises to the cytoplasm. The catalysed reaction is urea + 2 H2O + H(+) = hydrogencarbonate + 2 NH4(+). Its pathway is nitrogen metabolism; urea degradation; CO(2) and NH(3) from urea (urease route): step 1/1. The protein is Urease subunit gamma of Mycolicibacterium gilvum (strain PYR-GCK) (Mycobacterium gilvum (strain PYR-GCK)).